The chain runs to 592 residues: A-type ATP synthase subunit A (592 aa).

233-240 (GPFGSGKT) contacts ATP.

The protein belongs to the ATPase alpha/beta chains family. As to quaternary structure, has multiple subunits with at least A(3), B(3), C, D, E, F, H, I and proteolipid K(x).

It localises to the cell membrane. The catalysed reaction is ATP + H2O + 4 H(+)(in) = ADP + phosphate + 5 H(+)(out). In terms of biological role, component of the A-type ATP synthase that produces ATP from ADP in the presence of a proton gradient across the membrane. The A chain is the catalytic subunit. The chain is A-type ATP synthase subunit A from Saccharolobus islandicus (strain L.S.2.15 / Lassen #1) (Sulfolobus islandicus).